The chain runs to 29 residues: Glucagon (29 aa).

It belongs to the glucagon family.

Its subcellular location is the secreted. In terms of biological role, promotes hydrolysis of glycogen and lipids, and raises the blood sugar level. This is Glucagon (gcg) from Torpedo marmorata (Marbled electric ray).